We begin with the raw amino-acid sequence, 325 residues long: Siroheme decarboxylase NirDL subunit (325 aa).

It belongs to the Ahb/Nir family. In terms of assembly, forms a complex composed of NirDL, NirG and NirH. All proteins are required for the total conversion of siroheme to didecarboxysiroheme.

The catalysed reaction is siroheme + 2 H(+) = 12,18-didecarboxysiroheme + 2 CO2. The protein operates within porphyrin-containing compound metabolism. Functionally, involved in heme d1 biosynthesis. Catalyzes the decarboxylation of siroheme into didecarboxysiroheme. This Paracoccus denitrificans (strain Pd 1222) protein is Siroheme decarboxylase NirDL subunit.